The primary structure comprises 161 residues: Lipoprotein signal peptidase (161 aa).

3 consecutive transmembrane segments (helical) span residues 9-29, 64-84, and 96-113; these read WLWL…LVVE, WQKY…ANVL, and MAYA…IDRA. Catalysis depends on residues aspartate 120 and aspartate 138. Residues 133-153 traverse the membrane as a helical segment; it reads VFNIADVAIVMGAGLLILETF.

This sequence belongs to the peptidase A8 family.

The protein localises to the cell inner membrane. The enzyme catalyses Release of signal peptides from bacterial membrane prolipoproteins. Hydrolyzes -Xaa-Yaa-Zaa-|-(S,diacylglyceryl)Cys-, in which Xaa is hydrophobic (preferably Leu), and Yaa (Ala or Ser) and Zaa (Gly or Ala) have small, neutral side chains.. It functions in the pathway protein modification; lipoprotein biosynthesis (signal peptide cleavage). Functionally, this protein specifically catalyzes the removal of signal peptides from prolipoproteins. This is Lipoprotein signal peptidase from Haemophilus ducreyi (strain 35000HP / ATCC 700724).